The chain runs to 506 residues: Kynureninase 1 (506 aa).

Pyridoxal 5'-phosphate-binding positions include L141, T142, 169–172 (FPSD), D254, H257, and Y279. Residue K280 is modified to N6-(pyridoxal phosphate)lysine. Over residues 303–319 (ETAPTTTPDGTNGNPKT) the composition is skewed to low complexity. The tract at residues 303–322 (ETAPTTTPDGTNGNPKTISD) is disordered. W334 and N362 together coordinate pyridoxal 5'-phosphate.

The protein belongs to the kynureninase family. In terms of assembly, homodimer. Pyridoxal 5'-phosphate serves as cofactor.

It localises to the cytoplasm. It carries out the reaction L-kynurenine + H2O = anthranilate + L-alanine + H(+). It catalyses the reaction 3-hydroxy-L-kynurenine + H2O = 3-hydroxyanthranilate + L-alanine + H(+). It participates in amino-acid degradation; L-kynurenine degradation; L-alanine and anthranilate from L-kynurenine: step 1/1. Its pathway is cofactor biosynthesis; NAD(+) biosynthesis; quinolinate from L-kynurenine: step 2/3. Functionally, catalyzes the cleavage of L-kynurenine (L-Kyn) and L-3-hydroxykynurenine (L-3OHKyn) into anthranilic acid (AA) and 3-hydroxyanthranilic acid (3-OHAA), respectively. In Phaeosphaeria nodorum (strain SN15 / ATCC MYA-4574 / FGSC 10173) (Glume blotch fungus), this protein is Kynureninase 1.